We begin with the raw amino-acid sequence, 102 residues long: UPF0045 protein Mb1933 (102 aa).

It belongs to the UPF0045 family.

In Mycobacterium bovis (strain ATCC BAA-935 / AF2122/97), this protein is UPF0045 protein Mb1933.